The primary structure comprises 94 residues: Small ribosomal subunit protein bS20 (94 aa).

It belongs to the bacterial ribosomal protein bS20 family.

In terms of biological role, binds directly to 16S ribosomal RNA. The polypeptide is Small ribosomal subunit protein bS20 (Symbiobacterium thermophilum (strain DSM 24528 / JCM 14929 / IAM 14863 / T)).